The sequence spans 510 residues: Bifunctional purine biosynthesis protein PurH (510 aa).

Positions 1 to 142 (MRALLSVSDK…KNYKDVMVLC (142 aa)) constitute an MGS-like domain.

Belongs to the PurH family.

It catalyses the reaction (6R)-10-formyltetrahydrofolate + 5-amino-1-(5-phospho-beta-D-ribosyl)imidazole-4-carboxamide = 5-formamido-1-(5-phospho-D-ribosyl)imidazole-4-carboxamide + (6S)-5,6,7,8-tetrahydrofolate. The catalysed reaction is IMP + H2O = 5-formamido-1-(5-phospho-D-ribosyl)imidazole-4-carboxamide. It functions in the pathway purine metabolism; IMP biosynthesis via de novo pathway; 5-formamido-1-(5-phospho-D-ribosyl)imidazole-4-carboxamide from 5-amino-1-(5-phospho-D-ribosyl)imidazole-4-carboxamide (10-formyl THF route): step 1/1. The protein operates within purine metabolism; IMP biosynthesis via de novo pathway; IMP from 5-formamido-1-(5-phospho-D-ribosyl)imidazole-4-carboxamide: step 1/1. The protein is Bifunctional purine biosynthesis protein PurH of Campylobacter jejuni (strain RM1221).